The chain runs to 417 residues: Histidine biosynthesis bifunctional protein his7 (417 aa).

The interval 225–299 is phosphoribosyl-AMP cyclohydrolase; sequence GLVYSSKESV…HLDTLHCFGQ (75 aa). The segment at 303 to 387 is phosphoribosyl-ATP pyrophosphohydrolase; sequence LCQLEKTLID…ISRHLDLKHR (85 aa).

The protein resides in the cytoplasm. The enzyme catalyses 1-(5-phospho-beta-D-ribosyl)-5'-AMP + H2O = 1-(5-phospho-beta-D-ribosyl)-5-[(5-phospho-beta-D-ribosylamino)methylideneamino]imidazole-4-carboxamide. It catalyses the reaction 1-(5-phospho-beta-D-ribosyl)-ATP + H2O = 1-(5-phospho-beta-D-ribosyl)-5'-AMP + diphosphate + H(+). Its pathway is amino-acid biosynthesis; L-histidine biosynthesis; L-histidine from 5-phospho-alpha-D-ribose 1-diphosphate: step 2/9. It participates in amino-acid biosynthesis; L-histidine biosynthesis; L-histidine from 5-phospho-alpha-D-ribose 1-diphosphate: step 3/9. This Schizosaccharomyces pombe (strain 972 / ATCC 24843) (Fission yeast) protein is Histidine biosynthesis bifunctional protein his7.